The sequence spans 365 residues: Histidinol-phosphate aminotransferase 2 (365 aa).

K221 carries the N6-(pyridoxal phosphate)lysine modification.

The protein belongs to the class-II pyridoxal-phosphate-dependent aminotransferase family. Histidinol-phosphate aminotransferase subfamily. Homodimer. Requires pyridoxal 5'-phosphate as cofactor.

It catalyses the reaction L-histidinol phosphate + 2-oxoglutarate = 3-(imidazol-4-yl)-2-oxopropyl phosphate + L-glutamate. Its pathway is amino-acid biosynthesis; L-histidine biosynthesis; L-histidine from 5-phospho-alpha-D-ribose 1-diphosphate: step 7/9. The sequence is that of Histidinol-phosphate aminotransferase 2 (hisC2) from Bradyrhizobium diazoefficiens (strain JCM 10833 / BCRC 13528 / IAM 13628 / NBRC 14792 / USDA 110).